Consider the following 870-residue polypeptide: Radial spoke head 10 homolog B2 (870 aa).

Positions 1-16 (MVKEKKKADKKGEKSA) are enriched in basic and acidic residues. Residues 1–44 (MVKEKKKADKKGEKSARSPSSLSDNLDFSKQDGNTTRQEMSPAG) form a disordered region. Residues 17–39 (RSPSSLSDNLDFSKQDGNTTRQE) are compositionally biased toward polar residues. MORN repeat units follow at residues 86-108 (YEGE…GGCT), 109-131 (YRGM…DGLK), 132-154 (YEGD…DGSM), 155-177 (YEGE…TQPV), 179-201 (YIGH…QEGT), 204-226 (YEGD…SGNI), 227-249 (YEGQ…TTNE), 251-273 (YTGR…LKRI), 284-306 (YIGE…SGAM), and 307-329 (YDGE…NGRV). Residues 674 to 704 (NKSPSAVMSHESDAAHSDSARSSSSKLELSP) form a disordered region. The segment covering 683 to 692 (HESDAAHSDS) has biased composition (basic and acidic residues). Residues 693–703 (ARSSSSKLELS) show a composition bias toward low complexity. Residues 784 to 811 (KEKIRADRLRSTAQAQQRKMEDDELEAR) are a coiled coil. The segment at 840 to 870 (VSSSHLILDPPKEDVTVSPSSKTITSKKKKK) is disordered.

In terms of assembly, interacts with RSPH6A. Does not appear to be part of the axonemal radial spoke complexes 1 or 2.

The protein localises to the cytoplasm. It localises to the cytoskeleton. Its subcellular location is the cilium axoneme. It is found in the cell projection. The protein resides in the cilium. The protein localises to the flagellum. In terms of biological role, may function as part of the axonemal radial spoke complex 3 (RS3). Radial spoke complexes are important for ciliary motility. This is Radial spoke head 10 homolog B2 (RSPH10B2) from Homo sapiens (Human).